A 246-amino-acid polypeptide reads, in one-letter code: Peptide methionine sulfoxide reductase (246 aa).

Cysteine 48 serves as the catalytic Cysteine sulfenic acid (-SOH) intermediate. Cysteine 48 and cysteine 246 are joined by a disulfide.

Post-translationally, conjugated to URM1, a ubiquitin-like protein.

The enzyme catalyses L-methionyl-[protein] + [thioredoxin]-disulfide + H2O = L-methionyl-(S)-S-oxide-[protein] + [thioredoxin]-dithiol. It carries out the reaction [thioredoxin]-disulfide + L-methionine + H2O = L-methionine (S)-S-oxide + [thioredoxin]-dithiol. In terms of biological role, has an important function as a repair enzyme for proteins that have been inactivated by oxidation. Catalyzes the reduction of methionine sulfoxide in proteins to methionine. Does not catalyze the reverse reaction involving the oxidation of methionine residues. This Drosophila melanogaster (Fruit fly) protein is Peptide methionine sulfoxide reductase.